Consider the following 447-residue polypeptide: ATP-dependent protease ATPase subunit HslU (447 aa).

ATP contacts are provided by residues isoleucine 18, 60 to 65 (GVGKTE), aspartate 259, glutamate 325, and arginine 397.

This sequence belongs to the ClpX chaperone family. HslU subfamily. A double ring-shaped homohexamer of HslV is capped on each side by a ring-shaped HslU homohexamer. The assembly of the HslU/HslV complex is dependent on binding of ATP.

The protein resides in the cytoplasm. ATPase subunit of a proteasome-like degradation complex; this subunit has chaperone activity. The binding of ATP and its subsequent hydrolysis by HslU are essential for unfolding of protein substrates subsequently hydrolyzed by HslV. HslU recognizes the N-terminal part of its protein substrates and unfolds these before they are guided to HslV for hydrolysis. The polypeptide is ATP-dependent protease ATPase subunit HslU (Burkholderia cenocepacia (strain ATCC BAA-245 / DSM 16553 / LMG 16656 / NCTC 13227 / J2315 / CF5610) (Burkholderia cepacia (strain J2315))).